Here is a 214-residue protein sequence, read N- to C-terminus: Ribonuclease HII (214 aa).

Residues 26-214 enclose the RNase H type-2 domain; it reads EIVCGVDEAG…PVRAALDLIR (189 aa). Residues Asp-32, Glu-33, and Asp-124 each coordinate a divalent metal cation.

It belongs to the RNase HII family. Requires Mn(2+) as cofactor. Mg(2+) serves as cofactor.

Its subcellular location is the cytoplasm. The catalysed reaction is Endonucleolytic cleavage to 5'-phosphomonoester.. Its function is as follows. Endonuclease that specifically degrades the RNA of RNA-DNA hybrids. This is Ribonuclease HII from Burkholderia cenocepacia (strain HI2424).